We begin with the raw amino-acid sequence, 471 residues long: Argininosuccinate lyase (471 aa).

This sequence belongs to the lyase 1 family. Argininosuccinate lyase subfamily.

The protein localises to the cytoplasm. The enzyme catalyses 2-(N(omega)-L-arginino)succinate = fumarate + L-arginine. Its pathway is amino-acid biosynthesis; L-arginine biosynthesis; L-arginine from L-ornithine and carbamoyl phosphate: step 3/3. In Parasynechococcus marenigrum (strain WH8102), this protein is Argininosuccinate lyase.